A 362-amino-acid chain; its full sequence is Methylthioribose-1-phosphate isomerase (362 aa).

The active-site Proton donor is the aspartate 252.

It belongs to the eIF-2B alpha/beta/delta subunits family. MtnA subfamily.

The protein localises to the cytoplasm. Its subcellular location is the nucleus. It catalyses the reaction 5-(methylsulfanyl)-alpha-D-ribose 1-phosphate = 5-(methylsulfanyl)-D-ribulose 1-phosphate. It participates in amino-acid biosynthesis; L-methionine biosynthesis via salvage pathway; L-methionine from S-methyl-5-thio-alpha-D-ribose 1-phosphate: step 1/6. Functionally, catalyzes the interconversion of methylthioribose-1-phosphate (MTR-1-P) into methylthioribulose-1-phosphate (MTRu-1-P). This chain is Methylthioribose-1-phosphate isomerase, found in Drosophila virilis (Fruit fly).